A 328-amino-acid chain; its full sequence is scyllo-inositol 2-dehydrogenase (NADP(+)) IolU (328 aa).

This sequence belongs to the Gfo/Idh/MocA family.

The enzyme catalyses scyllo-inositol + NADP(+) = scyllo-inosose + NADPH + H(+). Catalyzes the NADPH-dependent reduction of scyllo-inosose (SIS) to scyllo-inositol (SI) in vitro, but is unable to dehydrogenate scyllo-inositol and myo-inositol. Is less efficient than the functional paralog IolW. Under physiological conditions, may primarily function as an NADPH-dependent oxidoreductase that reduces carbonyl group(s) in its substrates. Cannot use NADH instead of NADPH. The polypeptide is scyllo-inositol 2-dehydrogenase (NADP(+)) IolU (Bacillus subtilis (strain 168)).